Consider the following 203-residue polypeptide: MKNRGRTKPKKNQWADHYTQKARDENYPARSVYKLMEIQKRFQVIKKGASVLDLGCAPGSWLIHAAELTGPSGRAVGIDLKPVDAALPPNAIAHTGDIFEMESTLGEAVGQDYDAVISDMAPATTGRKDIDAARSFALCEAALRVACGLLADGGNFVCKIFQGAEFKQFENQVKSRFTSHKIFKPDSCRKSSKEIYIIGLGKK.

Glycine 59, tryptophan 61, aspartate 79, aspartate 97, and aspartate 119 together coordinate S-adenosyl-L-methionine. The active-site Proton acceptor is the lysine 159.

It belongs to the class I-like SAM-binding methyltransferase superfamily. RNA methyltransferase RlmE family.

The protein resides in the cytoplasm. The enzyme catalyses uridine(2552) in 23S rRNA + S-adenosyl-L-methionine = 2'-O-methyluridine(2552) in 23S rRNA + S-adenosyl-L-homocysteine + H(+). Its function is as follows. Specifically methylates the uridine in position 2552 of 23S rRNA at the 2'-O position of the ribose in the fully assembled 50S ribosomal subunit. The protein is Ribosomal RNA large subunit methyltransferase E of Desulforapulum autotrophicum (strain ATCC 43914 / DSM 3382 / VKM B-1955 / HRM2) (Desulfobacterium autotrophicum).